A 227-amino-acid polypeptide reads, in one-letter code: UPF0173 metal-dependent hydrolase Bsph_4138 (227 aa).

This sequence belongs to the UPF0173 family.

This chain is UPF0173 metal-dependent hydrolase Bsph_4138, found in Lysinibacillus sphaericus (strain C3-41).